An 86-amino-acid polypeptide reads, in one-letter code: Photosystem I reaction center subunit PsaK (86 aa).

2 helical membrane passes run 14–34 and 57–77; these read LQWSPTVGLIIIIANIIAIAF and FGLPALLATTAFGHILGVGAV.

Belongs to the PsaG/PsaK family.

The protein resides in the cellular thylakoid membrane. This chain is Photosystem I reaction center subunit PsaK, found in Nostoc punctiforme (strain ATCC 29133 / PCC 73102).